The primary structure comprises 459 residues: Exodeoxyribonuclease 7 large subunit (459 aa).

It belongs to the XseA family. Heterooligomer composed of large and small subunits.

It is found in the cytoplasm. The enzyme catalyses Exonucleolytic cleavage in either 5'- to 3'- or 3'- to 5'-direction to yield nucleoside 5'-phosphates.. In terms of biological role, bidirectionally degrades single-stranded DNA into large acid-insoluble oligonucleotides, which are then degraded further into small acid-soluble oligonucleotides. The polypeptide is Exodeoxyribonuclease 7 large subunit (Pseudomonas aeruginosa (strain LESB58)).